The following is a 255-amino-acid chain: Antigen LPMC-61 (255 aa).

12 repeat units span residues 18–48 (WPER…QKQQ), 49–57 (WPEGQRQQL), 58–65 (WPEQQQQQ), 66–78 (WPEQ…QQQQ), 79–90 (WPQQQPQMQQEQ), 91–103 (WPQQ…QQQQ), 104–140 (WPQQ…LQQQ), 141–152 (WSEQQQQQQQQQ), 153–164 (WPEQPEQQQQQQ), 165–172 (WPEQQQQQ), 173–192 (WSDQ…QQQQ), and 193–210 (WPQQ…QQQQ). The interval 18-90 (WPERQQQQQP…QQQPQMQQEQ (73 aa)) is disordered. The interval 18–210 (WPERQQQQQP…QQQQQQQQQQ (193 aa)) is 12 X approximate tandem repeats, Gln-rich. Low complexity predominate over residues 149–210 (QQQQWPEQPE…QQQQQQQQQQ (62 aa)). Positions 149 to 224 (QQQQWPEQPE…DGVGIVVPYL (76 aa)) are disordered.

May be covalently linked by disulfide bonds to other polypeptides to form the 80 kDa antigen.

Functionally, unknown. The Gln-rich tandem repeats may be important for an unknown aspect of the parasitic life cycle. May be an important immunogen. This Eimeria tenella (Coccidian parasite) protein is Antigen LPMC-61.